Reading from the N-terminus, the 126-residue chain is Large ribosomal subunit protein bL12 (126 aa).

It belongs to the bacterial ribosomal protein bL12 family. In terms of assembly, homodimer. Part of the ribosomal stalk of the 50S ribosomal subunit. Forms a multimeric L10(L12)X complex, where L10 forms an elongated spine to which 2 to 4 L12 dimers bind in a sequential fashion. Binds GTP-bound translation factors.

In terms of biological role, forms part of the ribosomal stalk which helps the ribosome interact with GTP-bound translation factors. Is thus essential for accurate translation. In Helicobacter hepaticus (strain ATCC 51449 / 3B1), this protein is Large ribosomal subunit protein bL12.